A 284-amino-acid polypeptide reads, in one-letter code: Putative L-ribulose-5-phosphate 3-epimerase UlaE (284 aa).

This sequence belongs to the L-ribulose-5-phosphate 3-epimerase family.

The enzyme catalyses L-ribulose 5-phosphate = L-xylulose 5-phosphate. It participates in cofactor degradation; L-ascorbate degradation; D-xylulose 5-phosphate from L-ascorbate: step 3/4. Functionally, catalyzes the isomerization of L-xylulose-5-phosphate to L-ribulose-5-phosphate. Is involved in the anaerobic L-ascorbate utilization. The chain is Putative L-ribulose-5-phosphate 3-epimerase UlaE from Shigella dysenteriae serotype 1 (strain Sd197).